Consider the following 69-residue polypeptide: Putative membrane protein insertion efficiency factor (69 aa).

The protein belongs to the UPF0161 family.

It is found in the cell membrane. Its function is as follows. Could be involved in insertion of integral membrane proteins into the membrane. The polypeptide is Putative membrane protein insertion efficiency factor (Clostridium perfringens (strain SM101 / Type A)).